The primary structure comprises 163 residues: Crossover junction endodeoxyribonuclease RuvC (163 aa).

Catalysis depends on residues Asp-8, Glu-68, and Asp-140. Mg(2+) contacts are provided by Asp-8, Glu-68, and Asp-140.

This sequence belongs to the RuvC family. Homodimer which binds Holliday junction (HJ) DNA. The HJ becomes 2-fold symmetrical on binding to RuvC with unstacked arms; it has a different conformation from HJ DNA in complex with RuvA. In the full resolvosome a probable DNA-RuvA(4)-RuvB(12)-RuvC(2) complex forms which resolves the HJ. Mg(2+) is required as a cofactor.

The protein localises to the cytoplasm. It catalyses the reaction Endonucleolytic cleavage at a junction such as a reciprocal single-stranded crossover between two homologous DNA duplexes (Holliday junction).. Its function is as follows. The RuvA-RuvB-RuvC complex processes Holliday junction (HJ) DNA during genetic recombination and DNA repair. Endonuclease that resolves HJ intermediates. Cleaves cruciform DNA by making single-stranded nicks across the HJ at symmetrical positions within the homologous arms, yielding a 5'-phosphate and a 3'-hydroxyl group; requires a central core of homology in the junction. The consensus cleavage sequence is 5'-(A/T)TT(C/G)-3'. Cleavage occurs on the 3'-side of the TT dinucleotide at the point of strand exchange. HJ branch migration catalyzed by RuvA-RuvB allows RuvC to scan DNA until it finds its consensus sequence, where it cleaves and resolves the cruciform DNA. The sequence is that of Crossover junction endodeoxyribonuclease RuvC from Erythrobacter litoralis (strain HTCC2594).